The following is a 321-amino-acid chain: Dolichyl N-acetyl-alpha-D-glucosaminyl phosphate 3-beta-D-2,3-diacetamido-2,3-dideoxy-beta-D-glucuronosyltransferase (321 aa).

The next 2 membrane-spanning stretches (helical) occupy residues 252 to 272 (FGFL…FIYI) and 290 to 310 (LYIA…YGFF).

The protein belongs to the glycosyltransferase 2 family.

Its subcellular location is the cell membrane. The enzyme catalyses an archaeal dolichyl N-acetyl-alpha-D-glucosaminyl phosphate + UDP-2,3-diacetamido-2,3-dideoxy-alpha-D-glucuronate = an archaeal dolichyl 3-O-(2,3-diacetamido-2,3-dideoxy- beta-D-glucuronosyl)-N-acetyl- alpha-D-glucosaminyl phosphate + UDP + H(+). It participates in cell surface structure biogenesis; S-layer biogenesis. The protein operates within protein modification; protein glycosylation. Involved in the assembly of an N-linked disaccharide that decorates the S-layer glycoprotein and flagellins. AglC catalyzes the transfer of 2,3-diacetamido-2,3-dideoxy-alpha-D-glucuronic acid (Glc-2,3-diNAcA) from uridine 5'-diphospho 2,3-diacetamido-2,3-dideoxy-alpha-D-glucuronic acid (UDP-Glc-2,3-diNAcA) to the AglK product Dol-P-GlcNAc to yield Dol-P-GlcNAc-Glc-2,3-diNAcA. AglC is specific for the monophosphate-linked Dol-P-GlcNAc. The chain is Dolichyl N-acetyl-alpha-D-glucosaminyl phosphate 3-beta-D-2,3-diacetamido-2,3-dideoxy-beta-D-glucuronosyltransferase from Methanococcus voltae.